The chain runs to 162 residues: NADH-quinone oxidoreductase subunit I (162 aa).

2 4Fe-4S ferredoxin-type domains span residues 52-82 (LRRYPNGEERCIACKLCEAICPAQAITIEAG) and 93-122 (TRYDIDMVKCIYCGFCQEACPVDAIVEGPN). Residues C62, C65, C68, C72, C102, C105, C108, and C112 each contribute to the [4Fe-4S] cluster site.

The protein belongs to the complex I 23 kDa subunit family. As to quaternary structure, NDH-1 is composed of 14 different subunits. Subunits NuoA, H, J, K, L, M, N constitute the membrane sector of the complex. It depends on [4Fe-4S] cluster as a cofactor.

The protein localises to the cell inner membrane. The enzyme catalyses a quinone + NADH + 5 H(+)(in) = a quinol + NAD(+) + 4 H(+)(out). Functionally, NDH-1 shuttles electrons from NADH, via FMN and iron-sulfur (Fe-S) centers, to quinones in the respiratory chain. The immediate electron acceptor for the enzyme in this species is believed to be ubiquinone. Couples the redox reaction to proton translocation (for every two electrons transferred, four hydrogen ions are translocated across the cytoplasmic membrane), and thus conserves the redox energy in a proton gradient. The sequence is that of NADH-quinone oxidoreductase subunit I from Azorhizobium caulinodans (strain ATCC 43989 / DSM 5975 / JCM 20966 / LMG 6465 / NBRC 14845 / NCIMB 13405 / ORS 571).